Consider the following 373-residue polypeptide: Cytoplasmic tRNA 2-thiolation protein 1 (373 aa).

Belongs to the TtcA family. CTU1/NCS6/ATPBD3 subfamily.

It localises to the cytoplasm. It functions in the pathway tRNA modification; 5-methoxycarbonylmethyl-2-thiouridine-tRNA biosynthesis. Functionally, plays a central role in 2-thiolation of mcm(5)S(2)U at tRNA wobble positions of tRNA(Lys), tRNA(Glu) and tRNA(Gln). Directly binds tRNAs and probably acts by catalyzing adenylation of tRNAs, an intermediate required for 2-thiolation. It is unclear whether it acts as a sulfurtransferase that transfers sulfur from thiocarboxylated URM1 onto the uridine of tRNAs at wobble position. Prior mcm(5) tRNA modification by the elongator complex is required for 2-thiolation. May also be involved in protein urmylation. The polypeptide is Cytoplasmic tRNA 2-thiolation protein 1 (Malassezia globosa (strain ATCC MYA-4612 / CBS 7966) (Dandruff-associated fungus)).